A 246-amino-acid chain; its full sequence is Ribonuclease 3 (246 aa).

One can recognise an RNase III domain in the interval 20–145 (FSKLEKILGF…FVGAIYLDRG (126 aa)). Position 62 (E62) interacts with Mg(2+). D66 is an active-site residue. The Mg(2+) site is built by N131 and E134. Residue E134 is part of the active site. The region spanning 173–241 (SYKSLLIEWC…SKRGYFVFQS (69 aa)) is the DRBM domain.

This sequence belongs to the ribonuclease III family. In terms of assembly, homodimer. The cofactor is Mg(2+).

It is found in the cytoplasm. It catalyses the reaction Endonucleolytic cleavage to 5'-phosphomonoester.. Digests double-stranded RNA. Involved in the processing of primary rRNA transcript to yield the immediate precursors to the large and small rRNAs (23S and 16S). Processes some mRNAs, and tRNAs when they are encoded in the rRNA operon. Processes pre-crRNA and tracrRNA of type II CRISPR loci if present in the organism. The sequence is that of Ribonuclease 3 from Flavobacterium psychrophilum (strain ATCC 49511 / DSM 21280 / CIP 103535 / JIP02/86).